Reading from the N-terminus, the 104-residue chain is Chitin-binding protein 2 (104 aa).

In terms of assembly, oligomer in an unreduced state. Post-translationally, glycosylated.

In terms of biological role, chitin-binding protein. Has antifungal activity against C.krusei, C.albicans, C.tropicalis and C.parapsilosis. Inhibits C.albicans by increasing cell membrane permeability and production of reactive oxygen species. Has no hemagglutinating activity. This Moringa oleifera (Horseradish tree) protein is Chitin-binding protein 2.